The following is a 474-amino-acid chain: Receptor-transporting protein 3 (474 aa).

The Cytoplasmic portion of the chain corresponds to 1-453 (MMEEDIGDTE…SCCEAACNCM (453 aa)). Residues 53 to 164 (TFARFHCPSC…SSNCEACLLG (112 aa)) form a 3CxxC-type zinc finger. The disordered stretch occupies residues 175 to 304 (SKPPAPPLSP…ISCTSKPSTT (130 aa)). 2 stretches are compositionally biased toward polar residues: residues 197 to 228 (VTCS…NPTK) and 259 to 304 (VTCS…PSTT). A helical membrane pass occupies residues 454–474 (SQSPLCCLAFLILFLLLWYLL).

This sequence belongs to the TMEM7 family. As to quaternary structure, interacts with TAS2R16. In terms of tissue distribution, expressed predominantly in the liver. Not detected in the olfactory epithelium.

It localises to the membrane. In terms of biological role, promotes functional cell surface expression of the bitter taste receptors TAS2R16 and TAS2R43. The chain is Receptor-transporting protein 3 (Rtp3) from Mus musculus (Mouse).